The sequence spans 334 residues: HTH-type transcriptional regulator RegA (334 aa).

The 57-residue stretch at 1–57 (MAASIKDVAREARVSIATVSRVLNNVDVVNEETKKKVMEAIKKLDYRPNIVARSLKT) folds into the HTH lacI-type domain. Residues 5–24 (IKDVAREARVSIATVSRVLN) constitute a DNA-binding region (H-T-H motif).

Involved in the regulation of amylase production. The protein is HTH-type transcriptional regulator RegA (regA) of Clostridium acetobutylicum (strain ATCC 824 / DSM 792 / JCM 1419 / IAM 19013 / LMG 5710 / NBRC 13948 / NRRL B-527 / VKM B-1787 / 2291 / W).